The following is a 669-amino-acid chain: Cytokinesis protein 2 (669 aa).

Residues 1-261 (MSYSYEACFW…HLNSFTAADE (261 aa)) enclose the F-BAR domain. Residues 134-200 (KKGCEVLQKK…LKQEYKASQK (67 aa)) are a coiled coil. A phosphoserine mark is found at Ser-337 and Ser-366. A disordered region spans residues 372-518 (VQLQSNVDDS…DYNTRRDTST (147 aa)). Composition is skewed to basic and acidic residues over residues 381–391 (SVLRQKPDKPR) and 397–413 (EQLKPDEDSKNPDEKGL). Ser-421 is subject to Phosphoserine. Low complexity-rich tracts occupy residues 421–431 (SLSSPSESSSS) and 445–455 (MESMTTSVSSM). One can recognise an SH3 domain in the interval 599 to 667 (PVIEYAKAMY…PYNFIQLLHQ (69 aa)).

Interacts with INN1.

Its subcellular location is the cytoplasm. It localises to the cytoskeleton. The protein localises to the bud neck. Throughout most of the cell cycle it forms a double ring that coincides with the septins. After the onset of mitosis, forms a ring-like structure which colocalizes with the medial actin ring. Mediates cytoskeletal rearrangements required for cytokinesis. In conjunction with the medial actin ring exhibits contraction-like action. The sequence is that of Cytokinesis protein 2 (HOF1) from Saccharomyces cerevisiae (strain ATCC 204508 / S288c) (Baker's yeast).